A 266-amino-acid polypeptide reads, in one-letter code: GTP cyclohydrolase III (266 aa).

This sequence belongs to the archaeal-type GTP cyclohydrolase family.

It carries out the reaction GTP + 3 H2O = 2-amino-5-formylamino-6-(5-phospho-D-ribosylamino)pyrimidin-4(3H)-one + 2 phosphate + 2 H(+). Catalyzes the formation of 2-amino-5-formylamino-6-ribofuranosylamino-4(3H)-pyrimidinone ribonucleotide monophosphate and inorganic phosphate from GTP. Also has an independent pyrophosphate phosphohydrolase activity. The polypeptide is GTP cyclohydrolase III (Methanococcus maripaludis (strain C5 / ATCC BAA-1333)).